Reading from the N-terminus, the 119-residue chain is Large ribosomal subunit protein uL18 (119 aa).

It belongs to the universal ribosomal protein uL18 family. As to quaternary structure, part of the 50S ribosomal subunit; part of the 5S rRNA/L5/L18/L25 subcomplex. Contacts the 5S and 23S rRNAs.

Its function is as follows. This is one of the proteins that bind and probably mediate the attachment of the 5S RNA into the large ribosomal subunit, where it forms part of the central protuberance. This Chelativorans sp. (strain BNC1) protein is Large ribosomal subunit protein uL18.